We begin with the raw amino-acid sequence, 341 residues long: Calcium-binding protein 39 (341 aa).

It belongs to the Mo25 family. As to quaternary structure, component of a trimeric complex composed of STK11/LKB1, STRAD (STRADA or STRADB) and CAB39/MO25 (CAB39/MO25alpha or CAB39L/MO25beta): the complex tethers STK11/LKB1 in the cytoplasm and stimulates its catalytic activity.

It localises to the cytoplasm. Functionally, component of a complex that binds and activates STK11/LKB1. In the complex, required to stabilize the interaction between CAB39/MO25 (CAB39/MO25alpha or CAB39L/MO25beta) and STK11/LKB1. The sequence is that of Calcium-binding protein 39 (CAB39) from Bos taurus (Bovine).